The following is a 219-amino-acid chain: Transmembrane protein 179B (219 aa).

The next 4 membrane-spanning stretches (helical) occupy residues 9–29 (VELL…ATLT), 65–85 (FVAG…FFWV), 98–118 (IGLR…LVSA), and 162–182 (LHTA…ALLL). The residue at position 206 (Ser-206) is a Phosphoserine.

This sequence belongs to the TMEM179 family.

Its subcellular location is the membrane. This chain is Transmembrane protein 179B (Tmem179b), found in Mus musculus (Mouse).